We begin with the raw amino-acid sequence, 492 residues long: Lysine--tRNA ligase (492 aa).

Mg(2+) contacts are provided by Asp395 and Glu402.

It belongs to the class-II aminoacyl-tRNA synthetase family. In terms of assembly, homodimer. It depends on Mg(2+) as a cofactor.

It localises to the cytoplasm. The enzyme catalyses tRNA(Lys) + L-lysine + ATP = L-lysyl-tRNA(Lys) + AMP + diphosphate. This Thermus thermophilus (strain ATCC BAA-163 / DSM 7039 / HB27) protein is Lysine--tRNA ligase.